Consider the following 231-residue polypeptide: MTKLPNMTTTLNHLFDLPGQICHVQCGFCTTILLVSVPFTSLSMVVTVRCGHCTSLLSVNLMKASFIPLHLLASLSHLDETGKEEVAATDGVEEEAWKVNQEKENSPTTLVSSSDNEDEDVSRVYQVVNKPPEKRQRAPSAYNCFIKEEIRRLKAQNPSMAHKEAFSLAAKNWAHFPPAHNKRAASDQCFCEEDNNAILPCNVFEDHEESNNGFRERKAQRHSIWGKSPFE.

Residues 26 to 53 (CGFCTTILLVSVPFTSLSMVVTVRCGHC) form a C4-type zinc finger. Disordered regions lie at residues 98-120 (KVNQ…EDED) and 211-231 (NNGF…SPFE).

This sequence belongs to the YABBY family. In terms of assembly, interacts with SPL/NZZ.

It is found in the nucleus. Functionally, essential for the formation and the abaxial-adaxial asymmetric growth of the ovule outer integument. The protein is Axial regulator YABBY 4 (YAB4) of Arabidopsis thaliana (Mouse-ear cress).